The following is a 644-amino-acid chain: ATP-dependent zinc metalloprotease FtsH (644 aa).

The Cytoplasmic segment spans residues 1 to 4 (MAKN). The helical transmembrane segment at 5-25 (LILWLVIAVVLMSVFQSFGPS) threads the bilayer. Over 26-98 (ESNGRKVDYS…VGEPPEEPSL (73 aa)) the chain is Periplasmic. A helical transmembrane segment spans residues 99 to 119 (LASIFISWFPMLLLIGVWIFF). Residues 120–644 (MRQMQGGGGK…NTMSEQLGDK (525 aa)) are Cytoplasmic-facing. 192–199 (GPPGTGKT) provides a ligand contact to ATP. H414 is a Zn(2+) binding site. Residue E415 is part of the active site. Positions 418 and 492 each coordinate Zn(2+). Positions 598 to 644 (VRPPAGWEEPGASNNAGDNGSPKAPRPVDEPRTPNPGNTMSEQLGDK) are disordered. A compositionally biased stretch (polar residues) spans 632-644 (NPGNTMSEQLGDK).

In the central section; belongs to the AAA ATPase family. This sequence in the C-terminal section; belongs to the peptidase M41 family. In terms of assembly, homohexamer. Zn(2+) is required as a cofactor.

Its subcellular location is the cell inner membrane. Its function is as follows. Acts as a processive, ATP-dependent zinc metallopeptidase for both cytoplasmic and membrane proteins. Plays a role in the quality control of integral membrane proteins. In Escherichia coli O157:H7, this protein is ATP-dependent zinc metalloprotease FtsH.